The following is a 441-amino-acid chain: Proline--tRNA ligase (441 aa).

The protein belongs to the class-II aminoacyl-tRNA synthetase family. ProS type 2 subfamily. In terms of assembly, homodimer.

It is found in the cytoplasm. It carries out the reaction tRNA(Pro) + L-proline + ATP = L-prolyl-tRNA(Pro) + AMP + diphosphate. In terms of biological role, catalyzes the attachment of proline to tRNA(Pro) in a two-step reaction: proline is first activated by ATP to form Pro-AMP and then transferred to the acceptor end of tRNA(Pro). The polypeptide is Proline--tRNA ligase (Bartonella quintana (strain Toulouse) (Rochalimaea quintana)).